The primary structure comprises 206 residues: Urease accessory protein UreG (206 aa).

Residue 13–20 (GPVGSGKT) coordinates GTP.

Belongs to the SIMIBI class G3E GTPase family. UreG subfamily. Homodimer. UreD, UreF and UreG form a complex that acts as a GTP-hydrolysis-dependent molecular chaperone, activating the urease apoprotein by helping to assemble the nickel containing metallocenter of UreC. The UreE protein probably delivers the nickel.

It is found in the cytoplasm. Its function is as follows. Facilitates the functional incorporation of the urease nickel metallocenter. This process requires GTP hydrolysis, probably effectuated by UreG. This Haloquadratum walsbyi (strain DSM 16790 / HBSQ001) protein is Urease accessory protein UreG.